Here is a 557-residue protein sequence, read N- to C-terminus: Glutamyl-tRNA(Gln) amidotransferase subunit B, mitochondrial (557 aa).

The N-terminal 41 residues, 1 to 41 (MAAPMLRWGCRGRRWAFARVDGGSCHRRGAPTGSTSNQIRG), are a transit peptide targeting the mitochondrion. Residues 26 to 45 (HRRGAPTGSTSNQIRGESSV) are disordered. A compositionally biased stretch (polar residues) spans 32-45 (TGSTSNQIRGESSV). Residue Lys529 is modified to N6-succinyllysine.

This sequence belongs to the GatB/GatE family. GatB subfamily. In terms of assembly, subunit of the heterotrimeric GatCAB amidotransferase (AdT) complex, composed of A (QRSL1), B (GATB) and C (GATC) subunits. As to expression, predominantly expressed in tissues characterized by high rates of oxidative phosphorylation (OxPhos), including muscle and heart.

It is found in the mitochondrion. It catalyses the reaction L-glutamyl-tRNA(Gln) + L-glutamine + ATP + H2O = L-glutaminyl-tRNA(Gln) + L-glutamate + ADP + phosphate + H(+). Functionally, allows the formation of correctly charged Gln-tRNA(Gln) through the transamidation of misacylated Glu-tRNA(Gln) in the mitochondria. The reaction takes place in the presence of glutamine and ATP through an activated gamma-phospho-Glu-tRNA(Gln). In Homo sapiens (Human), this protein is Glutamyl-tRNA(Gln) amidotransferase subunit B, mitochondrial.